The following is a 420-amino-acid chain: Ketoreductase sphF (420 aa).

The interval 1-21 is disordered; sequence MLERPSFPRLGAGTRHHRPLG. Residues 29–49 traverse the membrane as a helical segment; it reads WLLAFTGISGIAGMMIPYVPW. Residues 275-298 are disordered; it reads RQKRSPSPGRHPALGSPPAQLRQD.

The protein resides in the membrane. It catalyses the reaction 3-oxopresphingofungin + NADPH + 2 H(+) = presphingofungin + NADP(+). Its pathway is secondary metabolite biosynthesis. In terms of biological role, ketoreductase; part of the gene cluster that mediates the biosynthesis of sphingofungins, bioactive molecules acting as sphingolipid inhibitors via inhibiting serine palmitoyl transferase (SPT). Within the pathway, sphF catalyzes the reduction of the C-3 ketone of 3-keto-presphingofungin to produce presphingofungin. Sphingofungin biosynthesis starts with the PKS sphB that produces an C18 polyketide precursor 3-hydroxyoctadeca-4,10-dienoyl-ACP containing one delta-6 desaturation and one delta-12 desaturation. The aminoacyl transferase sphA uses the sphB product to produce 3-keto-presphingofungin by adding an aminomalonate molecule. SphF then reduces the C-3 ketone of 3-keto-presphingofungin which leads to presphingofungin. The cytochrome P450 monooxygenase sphH converts presphingofungin into sphingofungin B1 which is further converted to sphingofungin B by the dioxygenase sphC. SphC is also able to convert presphingofungin into sphingofungin B2. The acetyltransferase sphE acetylates sphingofungin B to produce sphingofungin C, but can also convert sphingofungin B1 into sphingofungin C1 and sphingofungin B2 into sphingofungin C2. Finally, sphingofungin C can be spontaneously converted into sphingofungin D. The sequence is that of Ketoreductase sphF from Aspergillus fumigatus (strain CBS 144.89 / FGSC A1163 / CEA10) (Neosartorya fumigata).